A 329-amino-acid chain; its full sequence is MTLRNDWTRDEIQALYDQPFLDLVFEAQSVHRQHFQANTIQVSTLLSIKTGKCPEDCKYCSQSAHYDSKLEAEKRIAVDKVISEAQAAKESGSSRFCMGAAWRNPHERDMPYVLEMVREVKALGLETCMTLGMLNQSQAERLKDAGLDYYNHNLDTSREYYSHIISTRTFDDRLNTLDHVRHAGMKVCSGGIVGLGESRNDRIGLLQELATMPVHPESVPINMLVPIEGTPLAEVEKLDVTEWIRTIAVARIIMPHSYIRLSAGRESLSDSDQALAFMAGANSLFSGEKLLTTPNAGEGKDQILFAKLGLTAEKAKPTVAELSVDAMSA.

The Radical SAM core domain maps to 38 to 262 (NTIQVSTLLS…IMPHSYIRLS (225 aa)). The [4Fe-4S] cluster site is built by C53, C57, and C60. C97, C128, C188, and R260 together coordinate [2Fe-2S] cluster.

The protein belongs to the radical SAM superfamily. Biotin synthase family. Homodimer. The cofactor is [4Fe-4S] cluster. It depends on [2Fe-2S] cluster as a cofactor.

It carries out the reaction (4R,5S)-dethiobiotin + (sulfur carrier)-SH + 2 reduced [2Fe-2S]-[ferredoxin] + 2 S-adenosyl-L-methionine = (sulfur carrier)-H + biotin + 2 5'-deoxyadenosine + 2 L-methionine + 2 oxidized [2Fe-2S]-[ferredoxin]. Its pathway is cofactor biosynthesis; biotin biosynthesis; biotin from 7,8-diaminononanoate: step 2/2. Catalyzes the conversion of dethiobiotin (DTB) to biotin by the insertion of a sulfur atom into dethiobiotin via a radical-based mechanism. The polypeptide is Biotin synthase (Acinetobacter calcoaceticus).